We begin with the raw amino-acid sequence, 305 residues long: uncharacterized protein (305 aa).

Helical transmembrane passes span 52 to 72 (TINLTSAIIILVVGMFISKII), 89 to 109 (IAGFLSALMRYIIITFTFIAA), and 120 to 140 (VIAILGAAGMAIGLALQGSLS).

It belongs to the MscS (TC 1.A.23) family.

Its subcellular location is the cell membrane. This is an uncharacterized protein from Buchnera aphidicola subsp. Acyrthosiphon pisum (strain APS) (Acyrthosiphon pisum symbiotic bacterium).